Here is a 356-residue protein sequence, read N- to C-terminus: Histidinol-phosphate aminotransferase (356 aa).

At K214 the chain carries N6-(pyridoxal phosphate)lysine.

The protein belongs to the class-II pyridoxal-phosphate-dependent aminotransferase family. Histidinol-phosphate aminotransferase subfamily. Homodimer. Pyridoxal 5'-phosphate serves as cofactor.

The enzyme catalyses L-histidinol phosphate + 2-oxoglutarate = 3-(imidazol-4-yl)-2-oxopropyl phosphate + L-glutamate. It functions in the pathway amino-acid biosynthesis; L-histidine biosynthesis; L-histidine from 5-phospho-alpha-D-ribose 1-diphosphate: step 7/9. This chain is Histidinol-phosphate aminotransferase, found in Escherichia coli O8 (strain IAI1).